The following is a 255-amino-acid chain: Hydroxyacylglutathione hydrolase (255 aa).

Zn(2+) is bound by residues H56, H58, D60, H61, H114, D133, and H171.

Belongs to the metallo-beta-lactamase superfamily. Glyoxalase II family. Monomer. Requires Zn(2+) as cofactor.

It catalyses the reaction an S-(2-hydroxyacyl)glutathione + H2O = a 2-hydroxy carboxylate + glutathione + H(+). It functions in the pathway secondary metabolite metabolism; methylglyoxal degradation; (R)-lactate from methylglyoxal: step 2/2. Functionally, thiolesterase that catalyzes the hydrolysis of S-D-lactoyl-glutathione to form glutathione and D-lactic acid. The sequence is that of Hydroxyacylglutathione hydrolase from Rhodopseudomonas palustris (strain BisB18).